The sequence spans 240 residues: Ribonuclease PH (240 aa).

Phosphate-binding positions include arginine 86 and 124–126 (GTR).

It belongs to the RNase PH family. In terms of assembly, homohexameric ring arranged as a trimer of dimers.

It catalyses the reaction tRNA(n+1) + phosphate = tRNA(n) + a ribonucleoside 5'-diphosphate. Functionally, phosphorolytic 3'-5' exoribonuclease that plays an important role in tRNA 3'-end maturation. Removes nucleotide residues following the 3'-CCA terminus of tRNAs; can also add nucleotides to the ends of RNA molecules by using nucleoside diphosphates as substrates, but this may not be physiologically important. Probably plays a role in initiation of 16S rRNA degradation (leading to ribosome degradation) during starvation. The polypeptide is Ribonuclease PH (Rhodospirillum rubrum (strain ATCC 11170 / ATH 1.1.1 / DSM 467 / LMG 4362 / NCIMB 8255 / S1)).